Consider the following 268-residue polypeptide: Tryptophan synthase alpha chain (268 aa).

Active-site proton acceptor residues include glutamate 49 and aspartate 60.

It belongs to the TrpA family. As to quaternary structure, tetramer of two alpha and two beta chains.

The catalysed reaction is (1S,2R)-1-C-(indol-3-yl)glycerol 3-phosphate + L-serine = D-glyceraldehyde 3-phosphate + L-tryptophan + H2O. The protein operates within amino-acid biosynthesis; L-tryptophan biosynthesis; L-tryptophan from chorismate: step 5/5. Its function is as follows. The alpha subunit is responsible for the aldol cleavage of indoleglycerol phosphate to indole and glyceraldehyde 3-phosphate. The protein is Tryptophan synthase alpha chain of Vibrio parahaemolyticus serotype O3:K6 (strain RIMD 2210633).